A 232-amino-acid polypeptide reads, in one-letter code: Vesicle transport through interaction with t-SNAREs homolog 1B (232 aa).

Alanine 2 is subject to N-acetylalanine. Interaction with CLINT1 stretches follow at residues 2-23 and 69-73; these read AASA…GLLE and APLTF. Residues 2-208 are Cytoplasmic-facing; the sequence is AASAASSEHF…SRKVITNKLL (207 aa). The stretch at 36 to 98 forms a coiled coil; sequence AGTEEKKKLV…AKLHREVRST (63 aa). Residue arginine 107 is modified to Omega-N-methylarginine. Serine 138 is modified (phosphoserine). A coiled-coil region spans residues 160 to 201; that stretch reads GTEIIEELGEQRDQLERTKSRLVNTNENLSKSRKILRSMSRK. A helical; Anchor for type IV membrane protein membrane pass occupies residues 209 to 229; the sequence is LSVIILLELAILVGLVYYKFF. At 230-232 the chain is on the vesicular side; sequence RHH.

The protein belongs to the VTI1 family. As to quaternary structure, forms a SNARE complex with STX7, STX8 and VAMP8 which functions in the homotypic fusion of late endosomes. Component of the SNARE complex composed of STX7, STX8, VAMP7 and VIT1B that is required for heterotypic fusion of late endosomes with lysosomes. May interact with STX17. Interacts with CLINT1. Broadly expressed.

The protein localises to the early endosome membrane. Its subcellular location is the late endosome membrane. The protein resides in the lysosome membrane. It is found in the cytoplasmic granule. It localises to the recycling endosome membrane. Its function is as follows. V-SNARE that mediates vesicle transport pathways through interactions with t-SNAREs on the target membrane. These interactions are proposed to mediate aspects of the specificity of vesicle trafficking and to promote fusion of the lipid bilayers. In Mus musculus (Mouse), this protein is Vesicle transport through interaction with t-SNAREs homolog 1B (Vti1b).